Consider the following 160-residue polypeptide: Phosphopantetheine adenylyltransferase (160 aa).

Position 10 (Ser-10) interacts with substrate. ATP is bound by residues 10–11 (SF) and His-18. Substrate-binding residues include Lys-42, Thr-74, and Arg-88. ATP contacts are provided by residues 89–91 (GLR), Glu-99, and 124–130 (YSFISST).

The protein belongs to the bacterial CoaD family. Homohexamer. The cofactor is Mg(2+).

It is found in the cytoplasm. It carries out the reaction (R)-4'-phosphopantetheine + ATP + H(+) = 3'-dephospho-CoA + diphosphate. It functions in the pathway cofactor biosynthesis; coenzyme A biosynthesis; CoA from (R)-pantothenate: step 4/5. Its function is as follows. Reversibly transfers an adenylyl group from ATP to 4'-phosphopantetheine, yielding dephospho-CoA (dPCoA) and pyrophosphate. The chain is Phosphopantetheine adenylyltransferase from Leptospira interrogans serogroup Icterohaemorrhagiae serovar copenhageni (strain Fiocruz L1-130).